We begin with the raw amino-acid sequence, 358 residues long: RuBisCO accumulation factor 1 (358 aa).

Positions 11-194 (VSAAEAAELI…RQAIEKLLTD (184 aa)) are N-terminal alpha-helix. A C-terminal beta-sheet region spans residues 218–344 (ARLIPVAGTF…VVLVLRPKKI (127 aa)).

This sequence belongs to the RAF family. As to quaternary structure, homodimer. Forms an RbcL(8)-Raf1(8) complex. Forms complexes of many stoichiometries with RbcL with and without RbcS. RbcX and Raf1 can bind simultaneously to RbcL. Interacts with both RuBisCO subunits (ccbL, ccbS), GroEL, DnaK and alpha and beta phycocyanin (cpcA, cpcB) in pull-down experiments with tagged protein. C-terminally tagged Raf1 does not interact with either RuBisCO subunit, suggesting its C-terminus is involved in binding.

It localises to the cytoplasm. Its function is as follows. A major RuBisCO chaperone. Acts after GroEL-GroES chaperonin to fold and/or assemble the large subunit of RuBisCO (ccbL, rbcL). Cooperates with RbcX in RbcL folding, plays the major role in assembly of dimers into RbcL(8)-Raf1(8) intermediate complexes. RbcS replaces Raf1, leading to holoenzyme formation. Functionally, required for optimal reconstitution of RbcL(8) upon expression in E.coli. Has been suggested to be involved in RuBisCO recycling and homeostasis rather than assembly. This is RuBisCO accumulation factor 1 from Synechocystis sp. (strain ATCC 27184 / PCC 6803 / Kazusa).